Here is a 202-residue protein sequence, read N- to C-terminus: T-cell surface glycoprotein CD3 epsilon chain (202 aa).

A signal peptide spans 1–21; it reads MPSGSLWRVLGLCLLSVGAWG. At 22–125 the chain is on the extracellular side; that stretch reads QEDNEDPLEP…NCVEVDTMTA (104 aa). Positions 33–107 constitute an Ig-like domain; that stretch reads PQTSASARYK…TSNSLEKNYL (75 aa). Residues C54 and C96 are joined by a disulfide bond. A helical transmembrane segment spans residues 126–146; it reads VAIVVADVCITLGFLLLVYYW. The Cytoplasmic portion of the chain corresponds to 147 to 202; sequence SKNKKASSVTMMRGPGAGGRPRGQNKEKPPPVPNPDYEPIRKGQQDLYSGLNQRGI. Residues 156-202 form a disordered region; sequence TMMRGPGAGGRPRGQNKEKPPPVPNPDYEPIRKGQQDLYSGLNQRGI. Residues 170–187 form an NUMB-binding region region; it reads QNKEKPPPVPNPDYEPIR. Residues 173–200 enclose the ITAM domain; it reads EKPPPVPNPDYEPIRKGQQDLYSGLNQR. The tract at residues 174–181 is proline-rich sequence; the sequence is KPPPVPNP. Residues Y183 and Y194 each carry the phosphotyrosine modification. Over residues 192–202 the composition is skewed to polar residues; that stretch reads DLYSGLNQRGI.

In terms of assembly, the TCR-CD3 complex is composed of a CD3D/CD3E and a CD3G/CD3E heterodimers that preferentially associate with TCRalpha and TCRbeta, respectively, to form TCRalpha/CD3E/CD3G and TCRbeta/CD3G/CD3E trimers. In turn, the hexamer interacts with CD3Z homodimer to form the TCR-CD3 complex. Alternatively, TCRalpha and TCRbeta can be replaced by TCRgamma and TCRdelta. Interacts with CD6. Interacts (via Proline-rich sequence) with NCK1; the interaction is ligand dependent but independent of tyrosine kinase activation. Post-translationally, phosphorylated on Tyr residues after T-cell receptor triggering by LCK in association with CD4/CD8.

It is found in the cell membrane. Functionally, part of the TCR-CD3 complex present on T-lymphocyte cell surface that plays an essential role in adaptive immune response. When antigen presenting cells (APCs) activate T-cell receptor (TCR), TCR-mediated signals are transmitted across the cell membrane by the CD3 chains CD3D, CD3E, CD3G and CD3Z. All CD3 chains contain immunoreceptor tyrosine-based activation motifs (ITAMs) in their cytoplasmic domain. Upon TCR engagement, these motifs become phosphorylated by Src family protein tyrosine kinases LCK and FYN, resulting in the activation of downstream signaling pathways. In addition of this role of signal transduction in T-cell activation, CD3E plays an essential role in correct T-cell development. Also participates in internalization and cell surface down-regulation of TCR-CD3 complexes via endocytosis sequences present in CD3E cytosolic region. In addition to its role as a TCR coreceptor, it serves as a receptor for ITPRIPL1. Ligand recognition inhibits T-cell activation by promoting interaction with NCK1, which prevents CD3E-ZAP70 interaction and blocks the ERK-NFkB signaling cascade and calcium influx. This chain is T-cell surface glycoprotein CD3 epsilon chain (CD3E), found in Felis catus (Cat).